A 319-amino-acid chain; its full sequence is Serine acetyltransferase, plasmid (319 aa).

Belongs to the transferase hexapeptide repeat family.

The protein localises to the cytoplasm. It carries out the reaction L-serine + acetyl-CoA = O-acetyl-L-serine + CoA. The protein operates within amino-acid biosynthesis; L-cysteine biosynthesis; L-cysteine from L-serine: step 1/2. This is Serine acetyltransferase, plasmid (srpH) from Synechococcus elongatus (strain ATCC 33912 / PCC 7942 / FACHB-805) (Anacystis nidulans R2).